A 522-amino-acid chain; its full sequence is Penicillin-sensitive carboxypeptidase A (522 aa).

The Acyl-ester intermediate role is filled by S94. Residue K97 is the Proton acceptor of the active site. Residue S351 is part of the active site. Position 461 (K461) interacts with substrate.

Belongs to the peptidase S13 family.

It carries out the reaction Preferential cleavage: (Ac)2-L-Lys-D-Ala-|-D-Ala. Also transpeptidation of peptidyl-alanyl moieties that are N-acyl substituents of D-alanine.. With respect to regulation, inhibited by penicillin G. Carboxypeptidase. This is Penicillin-sensitive carboxypeptidase A (pscA) from Dictyostelium discoideum (Social amoeba).